Here is a 309-residue protein sequence, read N- to C-terminus: tRNA-cytidine(32) 2-sulfurtransferase (309 aa).

Positions 57–62 match the PP-loop motif motif; sequence SGGKDS. Residues Cys132, Cys135, and Cys223 each coordinate [4Fe-4S] cluster.

Belongs to the TtcA family. In terms of assembly, homodimer. The cofactor is Mg(2+). [4Fe-4S] cluster is required as a cofactor.

It is found in the cytoplasm. It catalyses the reaction cytidine(32) in tRNA + S-sulfanyl-L-cysteinyl-[cysteine desulfurase] + AH2 + ATP = 2-thiocytidine(32) in tRNA + L-cysteinyl-[cysteine desulfurase] + A + AMP + diphosphate + H(+). The protein operates within tRNA modification. In terms of biological role, catalyzes the ATP-dependent 2-thiolation of cytidine in position 32 of tRNA, to form 2-thiocytidine (s(2)C32). The sulfur atoms are provided by the cysteine/cysteine desulfurase (IscS) system. The protein is tRNA-cytidine(32) 2-sulfurtransferase of Variovorax paradoxus (strain S110).